Here is a 66-residue protein sequence, read N- to C-terminus: Cold shock protein 2 (66 aa).

Residues 4 to 63 (GTVKWFNADKGFGFITGEDGTDVFVHFSAIQTDGFKTLDEGQKVTYDEEQGDRGPQATNV) enclose the CSD domain.

It is found in the cytoplasm. This is Cold shock protein 2 (cspL) from Lactiplantibacillus plantarum (strain ATCC BAA-793 / NCIMB 8826 / WCFS1) (Lactobacillus plantarum).